The following is a 138-amino-acid chain: Phosphoribosyl-AMP cyclohydrolase (138 aa).

Aspartate 84 serves as a coordination point for Mg(2+). Cysteine 85 serves as a coordination point for Zn(2+). Residues aspartate 86 and aspartate 88 each coordinate Mg(2+). Cysteine 102 and cysteine 109 together coordinate Zn(2+).

Belongs to the PRA-CH family. Homodimer. Requires Mg(2+) as cofactor. Zn(2+) is required as a cofactor.

It is found in the cytoplasm. It catalyses the reaction 1-(5-phospho-beta-D-ribosyl)-5'-AMP + H2O = 1-(5-phospho-beta-D-ribosyl)-5-[(5-phospho-beta-D-ribosylamino)methylideneamino]imidazole-4-carboxamide. It functions in the pathway amino-acid biosynthesis; L-histidine biosynthesis; L-histidine from 5-phospho-alpha-D-ribose 1-diphosphate: step 3/9. Functionally, catalyzes the hydrolysis of the adenine ring of phosphoribosyl-AMP. The sequence is that of Phosphoribosyl-AMP cyclohydrolase from Burkholderia vietnamiensis (strain G4 / LMG 22486) (Burkholderia cepacia (strain R1808)).